The sequence spans 253 residues: Imidazole glycerol phosphate synthase subunit HisF (253 aa).

Catalysis depends on residues D11 and D130.

Belongs to the HisA/HisF family. As to quaternary structure, heterodimer of HisH and HisF.

The protein resides in the cytoplasm. The enzyme catalyses 5-[(5-phospho-1-deoxy-D-ribulos-1-ylimino)methylamino]-1-(5-phospho-beta-D-ribosyl)imidazole-4-carboxamide + L-glutamine = D-erythro-1-(imidazol-4-yl)glycerol 3-phosphate + 5-amino-1-(5-phospho-beta-D-ribosyl)imidazole-4-carboxamide + L-glutamate + H(+). It participates in amino-acid biosynthesis; L-histidine biosynthesis; L-histidine from 5-phospho-alpha-D-ribose 1-diphosphate: step 5/9. In terms of biological role, IGPS catalyzes the conversion of PRFAR and glutamine to IGP, AICAR and glutamate. The HisF subunit catalyzes the cyclization activity that produces IGP and AICAR from PRFAR using the ammonia provided by the HisH subunit. In Acidithiobacillus ferrooxidans (strain ATCC 23270 / DSM 14882 / CIP 104768 / NCIMB 8455) (Ferrobacillus ferrooxidans (strain ATCC 23270)), this protein is Imidazole glycerol phosphate synthase subunit HisF.